The following is a 195-amino-acid chain: PABIR family member 1 (195 aa).

It belongs to the FAM122 family.

The sequence is that of PABIR family member 1 from Homo sapiens (Human).